The sequence spans 176 residues: Large ribosomal subunit protein uL10 (176 aa).

Belongs to the universal ribosomal protein uL10 family. In terms of assembly, part of the ribosomal stalk of the 50S ribosomal subunit. The N-terminus interacts with L11 and the large rRNA to form the base of the stalk. The C-terminus forms an elongated spine to which L12 dimers bind in a sequential fashion forming a multimeric L10(L12)X complex.

Functionally, forms part of the ribosomal stalk, playing a central role in the interaction of the ribosome with GTP-bound translation factors. The polypeptide is Large ribosomal subunit protein uL10 (Carboxydothermus hydrogenoformans (strain ATCC BAA-161 / DSM 6008 / Z-2901)).